The primary structure comprises 194 residues: ATP-dependent Clp protease proteolytic subunit (194 aa).

S97 acts as the Nucleophile in catalysis. The active site involves H122.

It belongs to the peptidase S14 family. In terms of assembly, fourteen ClpP subunits assemble into 2 heptameric rings which stack back to back to give a disk-like structure with a central cavity, resembling the structure of eukaryotic proteasomes.

The protein resides in the cytoplasm. It catalyses the reaction Hydrolysis of proteins to small peptides in the presence of ATP and magnesium. alpha-casein is the usual test substrate. In the absence of ATP, only oligopeptides shorter than five residues are hydrolyzed (such as succinyl-Leu-Tyr-|-NHMec, and Leu-Tyr-Leu-|-Tyr-Trp, in which cleavage of the -Tyr-|-Leu- and -Tyr-|-Trp bonds also occurs).. Functionally, cleaves peptides in various proteins in a process that requires ATP hydrolysis. Has a chymotrypsin-like activity. Plays a major role in the degradation of misfolded proteins. The protein is ATP-dependent Clp protease proteolytic subunit of Lactobacillus helveticus (strain DPC 4571).